A 261-amino-acid chain; its full sequence is Ribonuclease HII (261 aa).

An RNase H type-2 domain is found at 71–260 (HYIAGVDEVG…LHKYRHNTLL (190 aa)). Aspartate 77, glutamate 78, and aspartate 169 together coordinate a divalent metal cation.

This sequence belongs to the RNase HII family. Requires Mn(2+) as cofactor. Mg(2+) serves as cofactor.

The protein resides in the cytoplasm. The enzyme catalyses Endonucleolytic cleavage to 5'-phosphomonoester.. Its function is as follows. Endonuclease that specifically degrades the RNA of RNA-DNA hybrids. This is Ribonuclease HII from Oceanobacillus iheyensis (strain DSM 14371 / CIP 107618 / JCM 11309 / KCTC 3954 / HTE831).